The chain runs to 339 residues: Glycerol-3-phosphate dehydrogenase [NAD(P)+] (339 aa).

NADPH is bound by residues S15, Y16, H36, and K110. Sn-glycerol 3-phosphate-binding residues include K110, G139, and T141. An NADPH-binding site is contributed by A143. Positions 195, 248, 258, 259, and 260 each coordinate sn-glycerol 3-phosphate. The active-site Proton acceptor is K195. R259 contacts NADPH. Positions 283 and 285 each coordinate NADPH.

It belongs to the NAD-dependent glycerol-3-phosphate dehydrogenase family.

Its subcellular location is the cytoplasm. The enzyme catalyses sn-glycerol 3-phosphate + NAD(+) = dihydroxyacetone phosphate + NADH + H(+). It carries out the reaction sn-glycerol 3-phosphate + NADP(+) = dihydroxyacetone phosphate + NADPH + H(+). Its pathway is membrane lipid metabolism; glycerophospholipid metabolism. Its function is as follows. Catalyzes the reduction of the glycolytic intermediate dihydroxyacetone phosphate (DHAP) to sn-glycerol 3-phosphate (G3P), the key precursor for phospholipid synthesis. The sequence is that of Glycerol-3-phosphate dehydrogenase [NAD(P)+] from Serratia proteamaculans (strain 568).